The chain runs to 326 residues: MKFVDSAKIYVKGGNGGNGCMSFRREKYVPKGGPDGGDGGRGGHVYLRADGQMSTLLDFRYKKHYEAQRGVHGQGSKKNGKMGKDTVIPVPCGTVVRNAADGSLIADLTEEGEELLVAEGGKGGKGNPHFASSTRQAPRYAEPGGVGMALEIELELKLMADVGLVGFPNAGKSTLISSVSAARPKIADYPFTTLVPNLGIVQYREYSSFVMADIPGIIEGAAEGKGLGLQFLKHIERTKVLAVLIAADSEDIEAEYASLKREMERFGSGLLEKPRVVLITKMDIAPEDFSVPSFSDDAPVLMISSVTGEGIDVLKDELWSRVKSEG.

The Obg domain occupies 1 to 159 (MKFVDSAKIY…LEIELELKLM (159 aa)). The disordered stretch occupies residues 119–138 (EGGKGGKGNPHFASSTRQAP). Positions 160–323 (ADVGLVGFPN…LKDELWSRVK (164 aa)) constitute an OBG-type G domain. Residues 166-173 (GFPNAGKS), 191-195 (FTTLV), 213-216 (DIPG), 280-283 (TKMD), and 304-306 (SSV) contribute to the GTP site. Residues Ser173 and Thr193 each contribute to the Mg(2+) site.

Belongs to the TRAFAC class OBG-HflX-like GTPase superfamily. OBG GTPase family. In terms of assembly, monomer. The cofactor is Mg(2+).

It is found in the cytoplasm. In terms of biological role, an essential GTPase which binds GTP, GDP and possibly (p)ppGpp with moderate affinity, with high nucleotide exchange rates and a fairly low GTP hydrolysis rate. Plays a role in control of the cell cycle, stress response, ribosome biogenesis and in those bacteria that undergo differentiation, in morphogenesis control. This is GTPase Obg from Chlorobium phaeobacteroides (strain BS1).